Consider the following 457-residue polypeptide: Cyanidin 3-O-galactoside 2''-O-xylosyltransferase FGGT1 (457 aa).

The protein belongs to the UDP-glycosyltransferase family. Expressed in ovaries.

The catalysed reaction is cyanidin 3-O-beta-D-galactoside + UDP-alpha-D-xylose = cyanidin 3-O-[beta-D-xylosyl-(1-&gt;2)-beta-D-galactoside] + UDP + H(+). It functions in the pathway pigment biosynthesis; anthocyanin biosynthesis. Its function is as follows. Xylosyltransferase involved in anthocyanin biosynthesis by catalyzing the xylosylation of cyanidin 3-O-galactoside to form cyanidin 3-O-[2-O-(-xylosyl)-galactoside]. Required for the accumulation of anthocyanin in red-fleshed kiwifruit varieties. The protein is Cyanidin 3-O-galactoside 2''-O-xylosyltransferase FGGT1 of Actinidia chinensis var. chinensis (Chinese soft-hair kiwi).